A 414-amino-acid polypeptide reads, in one-letter code: Putative L-lactate dehydrogenase (414 aa).

In terms of domain architecture, FMN hydroxy acid dehydrogenase spans 29–406 (RRLGAALTIQ…SPRHVTQLRR (378 aa)). Tyr55 contributes to the a 2-oxocarboxylate binding site. 2 residues coordinate FMN: Ser137 and Gln159. Tyr161 contributes to the a 2-oxocarboxylate binding site. Thr187 is an FMN binding site. Arg196 contributes to the a 2-oxocarboxylate binding site. FMN is bound at residue Lys277. Catalysis depends on His301, which acts as the Proton acceptor. An a 2-oxocarboxylate-binding site is contributed by Arg304. Residues 332-336 (DTGIM) and 355-356 (GR) each bind FMN.

It belongs to the FMN-dependent alpha-hydroxy acid dehydrogenase family. The cofactor is FMN.

The enzyme catalyses (S)-lactate + A = pyruvate + AH2. The chain is Putative L-lactate dehydrogenase (lldD) from Mycobacterium tuberculosis (strain ATCC 25618 / H37Rv).